Here is a 65-residue protein sequence, read N- to C-terminus: MPKMKSVKGAVKRFKVKKNGTIKRGSAFRSHILTKMSQKRKRNLRGPKTVHSTNVAGILSTLCKA.

The protein belongs to the bacterial ribosomal protein bL35 family.

The protein is Large ribosomal subunit protein bL35 of Aliarcobacter butzleri (strain RM4018) (Arcobacter butzleri).